The following is a 378-amino-acid chain: Putative F-box only protein 15 (378 aa).

Residues 5–52 (KRVYRSLPFELVEEILKKTPAESLNRFKSTCKQWYGIITSKRFMYNHL) enclose the F-box domain.

This is Putative F-box only protein 15 (FBX15) from Arabidopsis thaliana (Mouse-ear cress).